A 186-amino-acid polypeptide reads, in one-letter code: Lipid A palmitoyltransferase PagP (186 aa).

The first 25 residues, 1–25 (MKVSKYVAIFFFVFIQLISVGKVFA), serve as a signal peptide directing secretion. Residues His58, Asp101, and Ser102 contribute to the active site.

The protein belongs to the lipid A palmitoyltransferase family. In terms of assembly, homodimer.

It localises to the cell outer membrane. The enzyme catalyses lipid A (E. coli) + a 1-hexadecanoyl-2-acyl-sn-glycero-3-phosphocholine = hepta-acyl lipid A (E. coli) + a 2-acyl-sn-glycero-3-phosphocholine. It catalyses the reaction lipid IIA + a 1-hexadecanoyl-2-acyl-sn-glycero-3-phosphocholine = lipid IIB + a 2-acyl-sn-glycero-3-phosphocholine. It carries out the reaction lipid IVA (E. coli) + a 1-hexadecanoyl-2-acyl-sn-glycero-3-phosphocholine = lipid IVB (E. coli) + a 2-acyl-sn-glycero-3-phosphocholine. Functionally, transfers a palmitate residue from the sn-1 position of a phospholipid to the N-linked hydroxymyristate on the proximal unit of lipid A or its precursors. In Escherichia coli O6:K15:H31 (strain 536 / UPEC), this protein is Lipid A palmitoyltransferase PagP.